The primary structure comprises 232 residues: NAD(P)H-quinone oxidoreductase subunit K 1 (232 aa).

4 residues coordinate [4Fe-4S] cluster: C49, C50, C114, and C145.

Belongs to the complex I 20 kDa subunit family. NDH-1 can be composed of about 15 different subunits; different subcomplexes with different compositions have been identified which probably have different functions. [4Fe-4S] cluster is required as a cofactor.

It is found in the cellular thylakoid membrane. The enzyme catalyses a plastoquinone + NADH + (n+1) H(+)(in) = a plastoquinol + NAD(+) + n H(+)(out). It catalyses the reaction a plastoquinone + NADPH + (n+1) H(+)(in) = a plastoquinol + NADP(+) + n H(+)(out). In terms of biological role, NDH-1 shuttles electrons from an unknown electron donor, via FMN and iron-sulfur (Fe-S) centers, to quinones in the respiratory and/or the photosynthetic chain. The immediate electron acceptor for the enzyme in this species is believed to be plastoquinone. Couples the redox reaction to proton translocation, and thus conserves the redox energy in a proton gradient. Cyanobacterial NDH-1 also plays a role in inorganic carbon-concentration. The sequence is that of NAD(P)H-quinone oxidoreductase subunit K 1 from Acaryochloris marina (strain MBIC 11017).